Reading from the N-terminus, the 257-residue chain is Imidazole glycerol phosphate synthase subunit HisF (257 aa).

Catalysis depends on residues aspartate 11 and aspartate 130.

This sequence belongs to the HisA/HisF family. In terms of assembly, heterodimer of HisH and HisF.

It is found in the cytoplasm. It catalyses the reaction 5-[(5-phospho-1-deoxy-D-ribulos-1-ylimino)methylamino]-1-(5-phospho-beta-D-ribosyl)imidazole-4-carboxamide + L-glutamine = D-erythro-1-(imidazol-4-yl)glycerol 3-phosphate + 5-amino-1-(5-phospho-beta-D-ribosyl)imidazole-4-carboxamide + L-glutamate + H(+). It functions in the pathway amino-acid biosynthesis; L-histidine biosynthesis; L-histidine from 5-phospho-alpha-D-ribose 1-diphosphate: step 5/9. In terms of biological role, IGPS catalyzes the conversion of PRFAR and glutamine to IGP, AICAR and glutamate. The HisF subunit catalyzes the cyclization activity that produces IGP and AICAR from PRFAR using the ammonia provided by the HisH subunit. This chain is Imidazole glycerol phosphate synthase subunit HisF, found in Shewanella sediminis (strain HAW-EB3).